A 296-amino-acid chain; its full sequence is uncharacterized protein (296 aa).

Residues Met-1–Val-57 constitute a chloroplast transit peptide.

This sequence belongs to the NAD(P)-dependent epimerase/dehydratase family.

Its subcellular location is the plastid. The protein localises to the chloroplast. It localises to the plastoglobule. This is an uncharacterized protein from Arabidopsis thaliana (Mouse-ear cress).